The following is a 223-amino-acid chain: Carnitine transport permease protein OpuCD (223 aa).

The ABC transmembrane type-1 domain occupies 22–202; it reads FWRHFLMSAY…VMAILADVLL (181 aa). 5 helical membrane passes run 27–47, 63–83, 87–107, 148–168, and 182–202; these read LMSA…GVYI, IIQT…MGLG, VVLS…YTGI, ALVI…GGLG, and AIIL…DVLL.

It belongs to the binding-protein-dependent transport system permease family. In terms of assembly, the complex is composed of two ATP-binding proteins (OpuCA), two transmembrane proteins (OpuCB and OpuCD) and a solute-binding protein (OpuCC).

It is found in the cell membrane. Its function is as follows. Part of the ABC transporter complex OpuCABCD involved in carnitine uptake. Probably responsible for the translocation of the substrate across the membrane. Involved, with BetL and GbuABC, in osmoprotection and cryoprotection of Listeria. Can also mediate weak glycine betaine transport. This chain is Carnitine transport permease protein OpuCD (opuCD), found in Listeria monocytogenes serotype 1/2a (strain 10403S).